The primary structure comprises 678 residues: DNA ligase (678 aa).

NAD(+) is bound by residues 47–51 (DSDYD), 96–97 (SL), and E122. Catalysis depends on K124, which acts as the N6-AMP-lysine intermediate. NAD(+)-binding residues include R145, E182, K300, and K324. Zn(2+)-binding residues include C418, C421, C436, and C442. The BRCT domain occupies 602-678 (AHNESFTNKT…IFEEDLQNLL (77 aa)).

It belongs to the NAD-dependent DNA ligase family. LigA subfamily. It depends on Mg(2+) as a cofactor. Mn(2+) serves as cofactor.

The catalysed reaction is NAD(+) + (deoxyribonucleotide)n-3'-hydroxyl + 5'-phospho-(deoxyribonucleotide)m = (deoxyribonucleotide)n+m + AMP + beta-nicotinamide D-nucleotide.. In terms of biological role, DNA ligase that catalyzes the formation of phosphodiester linkages between 5'-phosphoryl and 3'-hydroxyl groups in double-stranded DNA using NAD as a coenzyme and as the energy source for the reaction. It is essential for DNA replication and repair of damaged DNA. The protein is DNA ligase of Francisella philomiragia subsp. philomiragia (strain ATCC 25017 / CCUG 19701 / FSC 153 / O#319-036).